The chain runs to 372 residues: 1,3,6,8-tetrahydroxynaphthalene synthase (372 aa).

Residue Cys138 is part of the active site.

This sequence belongs to the thiolase-like superfamily. Chalcone/stilbene synthases family. Homodimer.

The enzyme catalyses 5 malonyl-CoA + 5 H(+) = naphthalene-1,3,6,8-tetrol + 5 CO2 + 5 CoA + H2O. It functions in the pathway pigment biosynthesis; melanin biosynthesis. Functionally, involved in the biosynthesis of melanin but also various secondary metabolites containing a naphthoquinone ring. Catalyzes the iterative condensation of five CoA-linked malonyl units to form a pentaketide intermediate. THNS subsequently catalyzes the dual intramolecular Claisen and aldol condensations of this linear intermediate to produce the fused ring of 1,3,6,8-tetrahydroxynaphthalene (THN). In Streptomyces griseus, this protein is 1,3,6,8-tetrahydroxynaphthalene synthase.